The chain runs to 671 residues: DNA ligase (671 aa).

NAD(+)-binding positions include 32–36 (DAEYD), 81–82 (SL), and glutamate 113. Lysine 115 functions as the N6-AMP-lysine intermediate in the catalytic mechanism. Positions 136, 173, 290, and 314 each coordinate NAD(+). Zn(2+)-binding residues include cysteine 408, cysteine 411, cysteine 426, and cysteine 432. The BRCT domain maps to 593–671 (EIDSPFAGKT…EAEMIRLLGA (79 aa)).

This sequence belongs to the NAD-dependent DNA ligase family. LigA subfamily. Requires Mg(2+) as cofactor. Mn(2+) serves as cofactor.

It carries out the reaction NAD(+) + (deoxyribonucleotide)n-3'-hydroxyl + 5'-phospho-(deoxyribonucleotide)m = (deoxyribonucleotide)n+m + AMP + beta-nicotinamide D-nucleotide.. In terms of biological role, DNA ligase that catalyzes the formation of phosphodiester linkages between 5'-phosphoryl and 3'-hydroxyl groups in double-stranded DNA using NAD as a coenzyme and as the energy source for the reaction. It is essential for DNA replication and repair of damaged DNA. This Salmonella gallinarum (strain 287/91 / NCTC 13346) protein is DNA ligase.